The following is a 115-amino-acid chain: Large ribosomal subunit protein uL22 (115 aa).

It belongs to the universal ribosomal protein uL22 family. Part of the 50S ribosomal subunit.

Functionally, this protein binds specifically to 23S rRNA; its binding is stimulated by other ribosomal proteins, e.g. L4, L17, and L20. It is important during the early stages of 50S assembly. It makes multiple contacts with different domains of the 23S rRNA in the assembled 50S subunit and ribosome. The globular domain of the protein is located near the polypeptide exit tunnel on the outside of the subunit, while an extended beta-hairpin is found that lines the wall of the exit tunnel in the center of the 70S ribosome. This is Large ribosomal subunit protein uL22 from Lactiplantibacillus plantarum (strain ATCC BAA-793 / NCIMB 8826 / WCFS1) (Lactobacillus plantarum).